The sequence spans 526 residues: Bifunctional purine biosynthesis protein PurH (526 aa).

Residues 1–148 (MQRPIIIRRA…KNYSNVVVVV (148 aa)) form the MGS-like domain.

It belongs to the PurH family.

It catalyses the reaction (6R)-10-formyltetrahydrofolate + 5-amino-1-(5-phospho-beta-D-ribosyl)imidazole-4-carboxamide = 5-formamido-1-(5-phospho-D-ribosyl)imidazole-4-carboxamide + (6S)-5,6,7,8-tetrahydrofolate. The enzyme catalyses IMP + H2O = 5-formamido-1-(5-phospho-D-ribosyl)imidazole-4-carboxamide. Its pathway is purine metabolism; IMP biosynthesis via de novo pathway; 5-formamido-1-(5-phospho-D-ribosyl)imidazole-4-carboxamide from 5-amino-1-(5-phospho-D-ribosyl)imidazole-4-carboxamide (10-formyl THF route): step 1/1. It participates in purine metabolism; IMP biosynthesis via de novo pathway; IMP from 5-formamido-1-(5-phospho-D-ribosyl)imidazole-4-carboxamide: step 1/1. The chain is Bifunctional purine biosynthesis protein PurH from Baumannia cicadellinicola subsp. Homalodisca coagulata.